The sequence spans 238 residues: Uridylate kinase (238 aa).

Residue 12–15 (KLSG) participates in ATP binding. G54 serves as a coordination point for UMP. ATP is bound by residues G55 and R59. Residues D74 and 135-142 (TGNPYFTT) each bind UMP. Positions 162, 163, 168, and 171 each coordinate ATP.

The protein belongs to the UMP kinase family. In terms of assembly, homohexamer.

The protein localises to the cytoplasm. It carries out the reaction UMP + ATP = UDP + ADP. Its pathway is pyrimidine metabolism; CTP biosynthesis via de novo pathway; UDP from UMP (UMPK route): step 1/1. With respect to regulation, inhibited by UTP. Catalyzes the reversible phosphorylation of UMP to UDP. The sequence is that of Uridylate kinase from Nitrobacter winogradskyi (strain ATCC 25391 / DSM 10237 / CIP 104748 / NCIMB 11846 / Nb-255).